Consider the following 140-residue polypeptide: Pro-variola growth factor (140 aa).

The signal sequence occupies residues 1 to 18; the sequence is MSMKYLMLLFAAMIIRSF. At 19–100 the chain is on the extracellular side; it reads ANSGNAIETT…SEKPNTTTSY (82 aa). A glycan (N-linked (GlcNAc...) asparagine; by host) is linked at N34. The region spanning 41 to 81 is the EGF-like domain; sequence AIRLCGPEGDRYCFHGICIHARDIDGMYCRCSHGYTGIRCQ. 3 disulfides stabilise this stretch: C45–C58, C53–C69, and C71–C80. N95 carries an N-linked (GlcNAc...) asparagine; by host glycan. A helical transmembrane segment spans residues 101-121; the sequence is IPSPGIVLVLLVSIIVCCLLF. Over 122-140 the chain is Cytoplasmic; the sequence is VYRFTRRTNKLPLQDMVVP.

It belongs to the orthopoxvirus OPG019 family. In terms of assembly, variola growth factor interacts with host EGFR and promotes EGFR dimerization.

It localises to the host membrane. It is found in the secreted. Its function is as follows. Stimulates cellular proliferation (hyperplasia)and mobility around infected cells to promote rapid and efficient spread of infection. This effect is beneficial for virus replication in vivo, because poxviruses replicate possibly better in proliferating cells than in quiescent cells. Acts by binding host EGFR, inducing its dimerization, autophosphorylation and leading to activation of several cellular pathways regulating cell proliferation or cell survival. The activation by host EGFR of mitogen activated protein kinases (MAPK) and extracellular-signal regulated kinases (ERK) are essential for the positive effect of vaccinia growth factor on poxvirus virulence in vivo. The protein is Pro-variola growth factor (OPG019) of Variola virus (isolate Human/India/Ind3/1967) (VARV).